A 230-amino-acid polypeptide reads, in one-letter code: Orotidine 5'-phosphate decarboxylase (230 aa).

Substrate contacts are provided by residues aspartate 10, lysine 32, 59-68 (DLKYHDIPNT), threonine 119, arginine 180, glutamine 189, glycine 209, and arginine 210. Lysine 61 (proton donor) is an active-site residue.

It belongs to the OMP decarboxylase family. Type 1 subfamily. Homodimer.

It catalyses the reaction orotidine 5'-phosphate + H(+) = UMP + CO2. It functions in the pathway pyrimidine metabolism; UMP biosynthesis via de novo pathway; UMP from orotate: step 2/2. Functionally, catalyzes the decarboxylation of orotidine 5'-monophosphate (OMP) to uridine 5'-monophosphate (UMP). The chain is Orotidine 5'-phosphate decarboxylase from Haemophilus influenzae (strain 86-028NP).